Here is an 825-residue protein sequence, read N- to C-terminus: MSSDTRQTSGGNARSKRRLTDAVDEDGRPTATAEDPTSNPKRQRVSRACDSCRSKKDKCDGAQPICSTCASLSRPCTYRANPKKRGLPTGYIRTLELLWGLVFNKIQGSEEVVRTLLRAANIPSHLATMGKESEGSDTLLSSWKNSIVLKEIERLLTFLEQPEGDQERSARGEIDSPADAEESSVLSPETLEWQLPDSIAVASQSPLASGPSPVRLPRPSTTRLVRDSGTQTIPLGEIEDLTTNGSSHDRPVIASNSAREEHRLPPNPWPLLDIYFSYTQCWFPILEKHDILRTAFRQGDDDQYNSPSAAGDNAALWAVLALASIQQTSISTTRQLSDLPEDRPDPDQLYAKARSLIPTESGTYQLGHIQALLILSLIKLGQQDCAAAWMLVGQAVRSAQSLGLNDPSDATGVEKTAGRSKHVFLGCFVLETLVAAKLGLLPSLRKTDLTKVGLINEDGLEEWHPWEDQTGLRPIESSRSFQRGPLHALSTFNRLLSLMCILNELCCVRQTPANSMSYLGTLERQLQLWVSALPTSYRIDLQTVSTKPASPHIFGLEMMYEAVATAISLQLAVQKNERNGLRRASEGSKRLVSLLQAYMETYSLSATCPTFGIALTLGLPLPCMKKTAPWAFEASHGINHKLQSFSAHLATVWIHNTGSQRRPRHATQQGTHPRSPMAISLPGNNMRLTNLIEESRTGNLSTTDSYLSPTWMRTSNDENAVLSLPTPASSLNIASGVETNPTSQQITHQHRSSVVGKPNSALIMSDLTTPFPASGHHYQQTYDDASLHFNSLADIESTSSAQRPRIAPDLDALFDELASLDGTDR.

A compositionally biased stretch (polar residues) spans 1-12 (MSSDTRQTSGGN). The segment at 1–45 (MSSDTRQTSGGNARSKRRLTDAVDEDGRPTATAEDPTSNPKRQRV) is disordered. Positions 18–28 (RLTDAVDEDGR) are enriched in basic and acidic residues. The segment at residues 49–76 (CDSCRSKKDKCDGAQPICSTCASLSRPC) is a DNA-binding region (zn(2)-C6 fungal-type). Disordered regions lie at residues 160 to 186 (EQPE…SSVL), 204 to 224 (QSPL…TTRL), and 658 to 683 (GSQR…SLPG). A compositionally biased stretch (basic and acidic residues) spans 165-174 (DQERSARGEI). Residues 658-672 (GSQRRPRHATQQGTH) are compositionally biased toward polar residues.

It is found in the nucleus. Transcription activation of genes for enzymes and proteins of quinate metabolism by binding to a 16 base-pair sequence (consensus 5'-GGATAANNNNTTATCC-3') in front of each qut gene. In Emericella nidulans (strain FGSC A4 / ATCC 38163 / CBS 112.46 / NRRL 194 / M139) (Aspergillus nidulans), this protein is Quinic acid utilization activator (qutA).